The primary structure comprises 285 residues: Sulfotransferase 2A6 (285 aa).

A 3'-phosphoadenylyl sulfate-binding site is contributed by 44 to 49 (KSGTNW). Catalysis depends on H99, which acts as the Proton acceptor. Residues R121, S129, Y184, 218–223 (SSFQAM), and 247–249 (RKG) each bind 3'-phosphoadenylyl sulfate.

It belongs to the sulfotransferase 1 family. In terms of assembly, oligomer.

Its subcellular location is the cytoplasm. It is found in the cytosol. It carries out the reaction an alcohol + 3'-phosphoadenylyl sulfate = an alkyl sulfate + adenosine 3',5'-bisphosphate + H(+). It catalyses the reaction glycolithocholate + 3'-phosphoadenylyl sulfate = sulfoglycolithocholate + adenosine 3',5'-bisphosphate + H(+). The enzyme catalyses taurolithocholate + 3'-phosphoadenylyl sulfate = taurolithocholate 3-sulfate + adenosine 3',5'-bisphosphate + H(+). The catalysed reaction is 3beta-hydroxyandrost-5-en-17-one + 3'-phosphoadenylyl sulfate = dehydroepiandrosterone 3-sulfate + adenosine 3',5'-bisphosphate + H(+). In terms of biological role, sulfotransferase that utilizes 3'-phospho-5'-adenylyl sulfate (PAPS) as sulfonate donor to catalyze the sulfonation of the hydroxyl group of hydroxysteroids and bile acids. The polypeptide is Sulfotransferase 2A6 (Mus musculus (Mouse)).